Reading from the N-terminus, the 358-residue chain is CCAAT/enhancer-binding protein alpha (358 aa).

Residues 1–55 are disordered; the sequence is MESADFYEAEPRPPMSSHLQSPPHAPSNAAFGFPRGAGPAPPPAPPAAPEPLGGI. A required to repress E2F1:TFDP1-mediated transcription, to inhibit cell cycle and to induce adipocyte differentiation region spans residues 1–70; the sequence is MESADFYEAE…SIDISAYIDP (70 aa). Positions 29 to 38 are enriched in low complexity; it reads AAFGFPRGAG. Pro residues predominate over residues 39 to 49; that stretch reads PAPPPAPPAAP. The segment at 54 to 72 is required for interaction with TRIB1; the sequence is GICEHETSIDISAYIDPAA. The required to induce adipocyte differentiation stretch occupies residues 126–200; the sequence is PPGYGCAAAG…HASPAHLAAP (75 aa). Lysine 159 bears the N6-acetyllysine; alternate mark. Lysine 159 is covalently cross-linked (Glycyl lysine isopeptide (Lys-Gly) (interchain with G-Cter in SUMO); alternate). Lysine 159 participates in a covalent cross-link: Glycyl lysine isopeptide (Lys-Gly) (interchain with G-Cter in SUMO2); alternate. Disordered regions lie at residues 176-195 and 213-310; these read LFPY…ASPA and TMHL…NVET. Residues 179-191 are compositionally biased toward pro residues; it reads YQPPPPPPPPHPH. Residues 180 to 194 form a required to functionally cooperate with SREBF1 in promoter activation region; it reads QPPPPPPPPHPHASP. Serine 193 carries the post-translational modification Phosphoserine. Residues 220 to 234 show a composition bias toward pro residues; sequence HPTPPPTPVPSPHPA. Residues threonine 222 and threonine 226 each carry the phosphothreonine; by GSK3 modification. Serine 230 carries the phosphoserine; by GSK3 modification. Residues 240–358 are interaction with FOXO1; sequence AGLPGPGGSL…SLVKAMGNCA (119 aa). Residues 261 to 271 are compositionally biased toward gly residues; sequence TGGGGGGGAGA. Over residues 276 to 292 the composition is skewed to basic and acidic residues; the sequence is KSVDKNSNEYRVRRERN. The 64-residue stretch at 282-345 folds into the bZIP domain; the sequence is SNEYRVRRER…DTLRGIFRQL (64 aa). A DNA-binding region spans residues 285 to 300; it reads YRVRRERNNIAVRKSR. Residues 286-313 are basic motif; it reads RVRRERNNIAVRKSRDKAKQRNVETQQK. The interval 317–345 is leucine-zipper; it reads LTSDNDRLRKRVEQLSRELDTLRGIFRQL.

It belongs to the bZIP family. C/EBP subfamily. In terms of assembly, binds DNA as a homodimer and as a heterodimer. Can form stable heterodimers with CEBPB, CEBPD, CEBPE and CEBPG. Can form stable homodimers (also isoform 2 and isoform 3 dimers) and heterodimers with CEBPB (with isoform 2 and isoform 3) and CEBPG. Interacts with PRDM16. Interacts with UBN1. Interacts with ZNF638; this interaction increases transcriptional activation. Interacts with the complex TFDP2:E2F1; the interaction prevents CEBPA binding to target gene promoters and represses its transcriptional activity. Interacts with RB1. Interacts (when phosphorylated at Ser-193) with CDK2, CDK4, E2F4 and SMARCA2. Interacts with SREBPF1. Interacts with FOXO1 (via the Fork-head domain); the interaction increases when FOXO1 is deacetylated. Interacts with SIX1. Interacts (via recognition sequence) with TRIB1. As to quaternary structure, interacts with TAF1A and UBTF. Interacts with NPM1. Post-translationally, sumoylated, sumoylation blocks the inhibitory effect on cell proliferation by disrupting the interaction with SMARCA2. In terms of processing, phosphorylation at Ser-193 is required for interaction with CDK2, CDK4 and SWI/SNF complex leading to cell cycle inhibition. Dephosphorylated at Ser-193 by protein phosphatase 2A (PP2A) through PI3K/AKT signaling pathway regulation. Phosphorylation at Thr-222 and Thr-226 by GSK3 is constitutive in adipose tissue and lung. In liver, both Thr-222 and Thr-226 are phosphorylated only during feeding but not during fasting. Phosphorylation of the GSK3 consensus sites selectively decreases transactivation activity on IRE-controlled promoters. Ubiquitinated by COP1 upon interaction with TRIB1. Isoform 2 and isoform 3 are expressed in liver (at protein level).

It is found in the nucleus. The protein localises to the nucleolus. Its function is as follows. Transcription factor that coordinates proliferation arrest and the differentiation of myeloid progenitors, adipocytes, hepatocytes, and cells of the lung and the placenta. Binds directly to the consensus DNA sequence 5'-T[TG]NNGNAA[TG]-3' acting as an activator on distinct target genes. During early embryogenesis, plays essential and redundant functions with CEBPB. Essential for the transition from common myeloid progenitors (CMP) to granulocyte/monocyte progenitors (GMP). Critical for the proper development of the liver and the lung. Necessary for terminal adipocyte differentiation, is required for postnatal maintenance of systemic energy homeostasis and lipid storage. To regulate these different processes at the proper moment and tissue, interplays with other transcription factors and modulators. Down-regulates the expression of genes that maintain cells in an undifferentiated and proliferative state through E2F1 repression, which is critical for its ability to induce adipocyte and granulocyte terminal differentiation. Reciprocally E2F1 blocks adipocyte differentiation by binding to specific promoters and repressing CEBPA binding to its target gene promoters. Proliferation arrest also depends on a functional binding to SWI/SNF complex. In liver, regulates gluconeogenesis and lipogenesis through different mechanisms. To regulate gluconeogenesis, functionally cooperates with FOXO1 binding to IRE-controlled promoters and regulating the expression of target genes such as PCK1 or G6PC1. To modulate lipogenesis, interacts and transcriptionally synergizes with SREBF1 in promoter activation of specific lipogenic target genes such as ACAS2. In adipose tissue, seems to act as FOXO1 coactivator accessing to ADIPOQ promoter through FOXO1 binding sites. In terms of biological role, can act as dominant-negative. Binds DNA and have transctivation activity, even if much less efficiently than isoform 2. Does not inhibit cell proliferation. Directly and specifically enhances ribosomal DNA transcription interacting with RNA polymerase I-specific cofactors and inducing histone acetylation. This is CCAAT/enhancer-binding protein alpha from Rattus norvegicus (Rat).